The following is a 106-amino-acid chain: Large ribosomal subunit protein uL24 (106 aa).

The protein belongs to the universal ribosomal protein uL24 family. In terms of assembly, part of the 50S ribosomal subunit.

Its function is as follows. One of two assembly initiator proteins, it binds directly to the 5'-end of the 23S rRNA, where it nucleates assembly of the 50S subunit. In terms of biological role, one of the proteins that surrounds the polypeptide exit tunnel on the outside of the subunit. This is Large ribosomal subunit protein uL24 from Desulforamulus reducens (strain ATCC BAA-1160 / DSM 100696 / MI-1) (Desulfotomaculum reducens).